Reading from the N-terminus, the 343-residue chain is Galactoside alpha-(1,2)-fucosyltransferase 2 (343 aa).

The Cytoplasmic portion of the chain corresponds to 1-14; it reads MLVVQMPFSFPMAH. A helical; Signal-anchor for type II membrane protein membrane pass occupies residues 15–28; sequence FILFVFTVSTIFHV. Residues 29-343 are Lumenal-facing; it reads QQRLAKIQAM…AADLSPLLKH (315 aa). N-linked (GlcNAc...) asparagine glycosylation is found at Asn-188, Asn-282, and Asn-308.

The protein belongs to the glycosyltransferase 11 family.

Its subcellular location is the golgi apparatus. The protein resides in the golgi stack membrane. It catalyses the reaction a beta-D-galactosyl-(1-&gt;3)-N-acetyl-beta-D-glucosaminyl derivative + GDP-beta-L-fucose = an alpha-L-Fuc-(1-&gt;2)-beta-D-Gal-(1-&gt;3)-beta-D-GlcNAc derivative + GDP + H(+). The catalysed reaction is a beta-D-galactosyl-(1-&gt;4)-N-acetyl-beta-D-glucosaminyl derivative + GDP-beta-L-fucose = an alpha-L-Fuc-(1-&gt;2)-beta-D-Gal-(1-&gt;4)-beta-D-GlcNAc derivative + GDP + H(+). It carries out the reaction a neolactoside nLc4Cer + GDP-beta-L-fucose = a neolactoside IV(2)-alpha-Fuc-nLc4Cer + GDP + H(+). The enzyme catalyses a neolactoside nLc4Cer(d18:1(4E)) + GDP-beta-L-fucose = a neolactoside IV(2)-alpha-Fuc-nLc4Cer(d18:1(4E)) + GDP + H(+). It catalyses the reaction a ganglioside GM1 + GDP-beta-L-fucose = a ganglioside Fuc-GM1 + GDP + H(+). The catalysed reaction is a ganglioside GA1 + GDP-beta-L-fucose = a ganglioside Fuc-GA1 + GDP + H(+). It carries out the reaction Lc4Cer + GDP-beta-L-fucose = alpha-L-fucosyl-(1-&gt;2)-beta-D-galactosyl-(1-&gt;3)-N-acetyl-beta-D-glucosaminyl-(1-&gt;3)-beta-D-galactosyl-(1-&gt;4)-beta-D-glucosyl-(1&lt;-&gt;1')-ceramide + GDP + H(+). The enzyme catalyses a beta-D-Gal-(1-&gt;3)-beta-D-GlcNAc-(1-&gt;3)-beta-D-Gal-(1-&gt;4)-beta-D-Glc-(1&lt;-&gt;1')-Cer(d18:1(4E)) + GDP-beta-L-fucose = alpha-L-fucosyl-(1-&gt;2)- beta-D-galactosyl-(1-&gt;3)-N-acetyl-beta-D-glucosaminyl-(1-&gt;3)-beta-D-galactosyl-(1-&gt;4)-beta-D-glucosyl-(1&lt;-&gt;1')-N-acylsphing-4-enine + GDP + H(+). It catalyses the reaction a ganglioside GD1b + GDP-beta-L-fucose = a ganglioside Fuc-GD1b + GDP + H(+). The catalysed reaction is a ganglioside GM1 (d18:1(4E)) + GDP-beta-L-fucose = a ganglioside Fuc-GM1 (d18:1(4E)) + GDP + H(+). It carries out the reaction a globoside GalGb4Cer (d18:1(4E)) + GDP-beta-L-fucose = a globoside Globo-H (d18:1(4E)) + GDP + H(+). The enzyme catalyses a lactoside III(4)-a-Fuc-Lc4Cer + GDP-beta-L-fucose = a lactoside IV(2),III(4)-a-[Fuc]2-Lc4Cer + GDP + H(+). It catalyses the reaction beta-D-galactosyl-(1-&gt;3)-N-acetyl-D-galactosamine + GDP-beta-L-fucose = alpha-L-fucosyl-(1-&gt;2)-beta-D-galactosyl-(1-&gt;3)-N-acetyl-D-galactosamine + GDP + H(+). It functions in the pathway protein modification; protein glycosylation. Functionally, catalyzes the transfer of L-fucose, from a guanosine diphosphate-beta-L-fucose, to the terminal galactose on both O- and N-linked glycans chains of cell surface glycoproteins and glycolipids and the resulting epitope regulates several processes such as cell-cell interaction including host-microbe interaction, cell surface expression and cell proliferation. Preferentially fucosylates gangliosides GA1 and GM1 in the antrum, cecum and colon and in the female reproductive organs. Fucosylated host glycoproteins or glycolipids mediate interaction with intestinal microbiota influencing its composition. Creates a soluble precursor oligosaccharide FuC-alpha ((1,2)Galbeta-) called the H antigen which is an essential substrate for the final step in the soluble ABO blood group antigen synthesis pathway. The polypeptide is Galactoside alpha-(1,2)-fucosyltransferase 2 (Gorilla gorilla gorilla (Western lowland gorilla)).